A 318-amino-acid polypeptide reads, in one-letter code: Tyrosine--tRNA ligase (318 aa).

Tyr35 is an L-tyrosine binding site. Residues 40 to 48 (PSGKVHLGH) carry the 'HIGH' region motif. Positions 154, 158, 161, and 176 each coordinate L-tyrosine. The 'KMSKS' region signature appears at 211-215 (KMSSS). Residue Ser214 participates in ATP binding.

It belongs to the class-I aminoacyl-tRNA synthetase family. TyrS type 3 subfamily. In terms of assembly, homodimer.

The protein resides in the cytoplasm. The catalysed reaction is tRNA(Tyr) + L-tyrosine + ATP = L-tyrosyl-tRNA(Tyr) + AMP + diphosphate + H(+). Catalyzes the attachment of tyrosine to tRNA(Tyr) in a two-step reaction: tyrosine is first activated by ATP to form Tyr-AMP and then transferred to the acceptor end of tRNA(Tyr). The sequence is that of Tyrosine--tRNA ligase from Methanosphaera stadtmanae (strain ATCC 43021 / DSM 3091 / JCM 11832 / MCB-3).